Here is a 416-residue protein sequence, read N- to C-terminus: Gamma-glutamyl phosphate reductase (416 aa).

This sequence belongs to the gamma-glutamyl phosphate reductase family.

Its subcellular location is the cytoplasm. The enzyme catalyses L-glutamate 5-semialdehyde + phosphate + NADP(+) = L-glutamyl 5-phosphate + NADPH + H(+). Its pathway is amino-acid biosynthesis; L-proline biosynthesis; L-glutamate 5-semialdehyde from L-glutamate: step 2/2. Functionally, catalyzes the NADPH-dependent reduction of L-glutamate 5-phosphate into L-glutamate 5-semialdehyde and phosphate. The product spontaneously undergoes cyclization to form 1-pyrroline-5-carboxylate. This chain is Gamma-glutamyl phosphate reductase, found in Streptococcus equi subsp. zooepidemicus (strain MGCS10565).